A 343-amino-acid polypeptide reads, in one-letter code: N-acetyl-gamma-glutamyl-phosphate reductase (343 aa).

C152 is a catalytic residue.

The protein belongs to the NAGSA dehydrogenase family. Type 1 subfamily.

It localises to the cytoplasm. The catalysed reaction is N-acetyl-L-glutamate 5-semialdehyde + phosphate + NADP(+) = N-acetyl-L-glutamyl 5-phosphate + NADPH + H(+). It participates in amino-acid biosynthesis; L-arginine biosynthesis; N(2)-acetyl-L-ornithine from L-glutamate: step 3/4. Its function is as follows. Catalyzes the NADPH-dependent reduction of N-acetyl-5-glutamyl phosphate to yield N-acetyl-L-glutamate 5-semialdehyde. This Methanopyrus kandleri (strain AV19 / DSM 6324 / JCM 9639 / NBRC 100938) protein is N-acetyl-gamma-glutamyl-phosphate reductase.